Consider the following 582-residue polypeptide: Proline--tRNA ligase (582 aa).

It belongs to the class-II aminoacyl-tRNA synthetase family. ProS type 1 subfamily. In terms of assembly, homodimer.

It is found in the cytoplasm. It catalyses the reaction tRNA(Pro) + L-proline + ATP = L-prolyl-tRNA(Pro) + AMP + diphosphate. Its function is as follows. Catalyzes the attachment of proline to tRNA(Pro) in a two-step reaction: proline is first activated by ATP to form Pro-AMP and then transferred to the acceptor end of tRNA(Pro). As ProRS can inadvertently accommodate and process non-cognate amino acids such as alanine and cysteine, to avoid such errors it has two additional distinct editing activities against alanine. One activity is designated as 'pretransfer' editing and involves the tRNA(Pro)-independent hydrolysis of activated Ala-AMP. The other activity is designated 'posttransfer' editing and involves deacylation of mischarged Ala-tRNA(Pro). The misacylated Cys-tRNA(Pro) is not edited by ProRS. In Mycobacterium avium (strain 104), this protein is Proline--tRNA ligase.